A 356-amino-acid chain; its full sequence is 1-deoxy-D-xylulose 5-phosphate reductoisomerase (356 aa).

7 residues coordinate NADPH: Thr-7, Gly-8, Ser-9, Ile-10, Gly-31, Asn-33, and Asn-111. Residue Lys-112 coordinates 1-deoxy-D-xylulose 5-phosphate. NADPH is bound at residue Glu-113. Asp-131 is a Mn(2+) binding site. Ser-132, Glu-133, Ser-155, and His-178 together coordinate 1-deoxy-D-xylulose 5-phosphate. A Mn(2+)-binding site is contributed by Glu-133. Gly-184 contacts NADPH. 4 residues coordinate 1-deoxy-D-xylulose 5-phosphate: Ser-191, Asn-196, Lys-197, and Glu-200. Glu-200 provides a ligand contact to Mn(2+).

It belongs to the DXR family. The cofactor is Mg(2+). It depends on Mn(2+) as a cofactor.

It catalyses the reaction 2-C-methyl-D-erythritol 4-phosphate + NADP(+) = 1-deoxy-D-xylulose 5-phosphate + NADPH + H(+). Its pathway is isoprenoid biosynthesis; isopentenyl diphosphate biosynthesis via DXP pathway; isopentenyl diphosphate from 1-deoxy-D-xylulose 5-phosphate: step 1/6. Its function is as follows. Catalyzes the NADPH-dependent rearrangement and reduction of 1-deoxy-D-xylulose-5-phosphate (DXP) to 2-C-methyl-D-erythritol 4-phosphate (MEP). The sequence is that of 1-deoxy-D-xylulose 5-phosphate reductoisomerase from Campylobacter jejuni (strain RM1221).